The sequence spans 89 residues: MAKKSVIARNEKRIKLVAKYAVLRAELLKAGDYEALRKLPRDSSATRVRNRCVLTGRGRGVYAKYGLCRHMFRKFALEGKLPGVKKASW.

The protein belongs to the universal ribosomal protein uS14 family. Part of the 30S ribosomal subunit. Contacts proteins S3 and S10.

Functionally, binds 16S rRNA, required for the assembly of 30S particles and may also be responsible for determining the conformation of the 16S rRNA at the A site. This is Small ribosomal subunit protein uS14 from Pelodictyon phaeoclathratiforme (strain DSM 5477 / BU-1).